Consider the following 156-residue polypeptide: MPRRRVVAKRKILPDPKFQDRLVTKFVNDLMRKGKKSIAEGVCYGAFALIEERAKEDPLKTFKKALDNVKPVLEVKSRRVGGATYQVPVEVRQDRRVALGMRWIITYSKARGEKTMQEKLAGEIMDAANNRGNAVKKREDTHKMAEANKAFAHYRW.

Belongs to the universal ribosomal protein uS7 family. In terms of assembly, part of the 30S ribosomal subunit. Contacts proteins S9 and S11.

Functionally, one of the primary rRNA binding proteins, it binds directly to 16S rRNA where it nucleates assembly of the head domain of the 30S subunit. Is located at the subunit interface close to the decoding center, probably blocks exit of the E-site tRNA. This chain is Small ribosomal subunit protein uS7, found in Myxococcus xanthus (strain DK1622).